Consider the following 149-residue polypeptide: Interleukin-2 (149 aa).

The signal sequence occupies residues 1–20; that stretch reads MYRMQLLSCIALTLAVLANS. Thr-23 is a glycosylation site (O-linked (GalNAc...) threonine). A disulfide bond links Cys-78 and Cys-121. Asn-106 carries an N-linked (GlcNAc...) asparagine glycan.

The protein belongs to the IL-2 family.

The protein resides in the secreted. In terms of biological role, cytokine produced by activated CD4-positive helper T-cells and to a lesser extend activated CD8-positive T-cells and natural killer (NK) cells that plays pivotal roles in the immune response and tolerance. Binds to a receptor complex composed of either the high-affinity trimeric IL-2R (IL2RA/CD25, IL2RB/CD122 and IL2RG/CD132) or the low-affinity dimeric IL-2R (IL2RB and IL2RG). Interaction with the receptor leads to oligomerization and conformation changes in the IL-2R subunits resulting in downstream signaling starting with phosphorylation of JAK1 and JAK3. In turn, JAK1 and JAK3 phosphorylate the receptor to form a docking site leading to the phosphorylation of several substrates including STAT5. This process leads to activation of several pathways including STAT, phosphoinositide-3-kinase/PI3K and mitogen-activated protein kinase/MAPK pathways. Functions as a T-cell growth factor and can increase NK-cell cytolytic activity as well. Promotes strong proliferation of activated B-cells and subsequently immunoglobulin production. Plays a pivotal role in regulating the adaptive immune system by controlling the survival and proliferation of regulatory T-cells, which are required for the maintenance of immune tolerance. Moreover, participates in the differentiation and homeostasis of effector T-cell subsets, including Th1, Th2, Th17 as well as memory CD8-positive T-cells. This chain is Interleukin-2 (IL2), found in Equus caballus (Horse).